Here is a 217-residue protein sequence, read N- to C-terminus: Protein TNT (217 aa).

The disordered stretch occupies residues 1–217; the sequence is MSLVPGQHCS…HSTKQTGGKE (217 aa). Polar residues-rich tracts occupy residues 20–36 and 45–61; these read SPIT…TEFS and TSPQ…SQGP. Low complexity-rich tracts occupy residues 91–104 and 128–139; these read EPSL…LQSP and QSSESHVSSVQH. Composition is skewed to polar residues over residues 177-191 and 207-217; these read RLNT…SQLG and AHSTKQTGGKE.

In terms of tissue distribution, preferentially expressed in teratocarcinoma rather than in normal testis.

This is Protein TNT (C16orf82) from Homo sapiens (Human).